Here is a 173-residue protein sequence, read N- to C-terminus: Mediator of RNA polymerase II transcription subunit 10 (173 aa).

The segment covering 1–10 (MVQQQQQSQQ) has biased composition (low complexity). The disordered stretch occupies residues 1-42 (MVQQQQQSQQRMMELHERNDREKLARKTEKEREEERRKQEDD). Basic and acidic residues predominate over residues 13–42 (MELHERNDREKLARKTEKEREEERRKQEDD).

It belongs to the Mediator complex subunit 10 family. Component of the Mediator complex.

Its subcellular location is the nucleus. Component of the Mediator complex, a coactivator involved in the regulated transcription of nearly all RNA polymerase II-dependent genes. Mediator functions as a bridge to convey information from gene-specific regulatory proteins to the basal RNA polymerase II transcription machinery. Mediator is recruited to promoters by direct interactions with regulatory proteins and serves as a scaffold for the assembly of a functional preinitiation complex with RNA polymerase II and the general transcription factors. Required for germ cell development and for transcriptional activation of certain stage-specific inducible promoters. The protein is Mediator of RNA polymerase II transcription subunit 10 (mdt-10) of Caenorhabditis elegans.